The primary structure comprises 326 residues: NAD kinase (326 aa).

Asp-93 functions as the Proton acceptor in the catalytic mechanism. NAD(+) is bound by residues 93–94 (DG), Arg-98, 171–172 (NE), Arg-182, Asp-201, and 212–217 (TAHAFS).

Belongs to the NAD kinase family. A divalent metal cation serves as cofactor.

It localises to the cytoplasm. It carries out the reaction NAD(+) + ATP = ADP + NADP(+) + H(+). Its function is as follows. Involved in the regulation of the intracellular balance of NAD and NADP, and is a key enzyme in the biosynthesis of NADP. Catalyzes specifically the phosphorylation on 2'-hydroxyl of the adenosine moiety of NAD to yield NADP. This chain is NAD kinase, found in Thermobifida fusca (strain YX).